We begin with the raw amino-acid sequence, 191 residues long: Dephospho-CoA kinase (191 aa).

The 189-residue stretch at 3–191 (AIGITGSYAS…KLILVIARKL (189 aa)) folds into the DPCK domain. An ATP-binding site is contributed by 11 to 16 (ASGKTF).

Belongs to the CoaE family.

It is found in the cytoplasm. The enzyme catalyses 3'-dephospho-CoA + ATP = ADP + CoA + H(+). It functions in the pathway cofactor biosynthesis; coenzyme A biosynthesis; CoA from (R)-pantothenate: step 5/5. Catalyzes the phosphorylation of the 3'-hydroxyl group of dephosphocoenzyme A to form coenzyme A. The sequence is that of Dephospho-CoA kinase from Rickettsia felis (strain ATCC VR-1525 / URRWXCal2) (Rickettsia azadi).